A 616-amino-acid polypeptide reads, in one-letter code: Cleavage stimulation factor subunit 2 tau variant (616 aa).

Positions 16–94 constitute an RRM domain; the sequence is RSVFVGNIPY…RALRVDNAAS (79 aa). 2 disordered regions span residues 203–241 and 262–418; these read GKSQSVSVSGPGPGPGPGLCPGPNVLLNQQNPPAPQPQH and IPAP…SRAM. 2 stretches are compositionally biased toward low complexity: residues 223–233 and 319–331; these read PGPNVLLNQQN and VTPGGLPPRGLLG. Thr-320 is subject to Phosphothreonine. The segment covering 368–381 has biased composition (basic and acidic residues); sequence SGHDTRGPSSHEMR. The 1-1 repeat unit spans residues 418–422; sequence METRA. The interval 418–462 is 9 X 5 AA tandem repeats of M-E-T-R-[AG]; sequence METRAMETEVLETRVMERRGMETCAMETRGMEARGMDARGLEMRG. Residues 423–427 form a 1-2; approximate repeat; sequence METEV. Residues 428–432 form a 1-3; approximate repeat; sequence LETRV. Residues 433–437 form a 1-4; approximate repeat; the sequence is MERRG. A 1-5; approximate repeat occupies 438–442; sequence METCA. The 1-6 repeat unit spans residues 443 to 447; that stretch reads METRG. A 1-7; approximate repeat occupies 448 to 452; sequence MEARG. Residues 453-457 form a 1-8; approximate repeat; that stretch reads MDARG. The 1-9; approximate repeat unit spans residues 458–462; it reads LEMRG. 4 repeat units span residues 505–509, 510–514, 515–519, and 520–524. Positions 505–549 are 9 X 5 AA tandem repeats of G-[AT]-G-[MI]-Q; the sequence is GAGMQGTGIQGTGMQGAGIQGGGMQGAGIQGVSIQGGGIQGGGIQ. One copy of the 2-5; approximate repeat lies at 525-529; the sequence is GGGMQ. The stretch at 530 to 534 is one 2-6 repeat; the sequence is GAGIQ. The 2-7; approximate repeat unit spans residues 535 to 539; that stretch reads GVSIQ. A 2-8; approximate repeat occupies 540–544; the sequence is GGGIQ. The disordered stretch occupies residues 542–573; it reads GIQGGGIQGASKQGGSQPSSFSPGQSQVTPQD. A 2-9; approximate repeat occupies 545-549; sequence GGGIQ. The span at 550 to 568 shows a compositional bias: low complexity; it reads GASKQGGSQPSSFSPGQSQ. Ser-563 carries the post-translational modification Phosphoserine.

The protein localises to the nucleus. May play a significant role in AAUAAA-independent mRNA polyadenylation in germ cells. Directly involved in the binding to pre-mRNAs. This Homo sapiens (Human) protein is Cleavage stimulation factor subunit 2 tau variant (CSTF2T).